The chain runs to 119 residues: UPF0342 protein Athe_0692 (119 aa).

The protein belongs to the UPF0342 family.

In Caldicellulosiruptor bescii (strain ATCC BAA-1888 / DSM 6725 / KCTC 15123 / Z-1320) (Anaerocellum thermophilum), this protein is UPF0342 protein Athe_0692.